Reading from the N-terminus, the 86-residue chain is U18-theraphotoxin-Cg1a (86 aa).

Residues 1 to 20 form the signal peptide; it reads KASVLITLAVLGVMFVWTSA. Residues 21–49 constitute a propeptide that is removed on maturation; that stretch reads AELEERGSDQRDSPALIKSMAKVFQSEER. 3 disulfides stabilise this stretch: Cys-51–Cys-65, Cys-58–Cys-70, and Cys-64–Cys-78. Phe-84 is subject to Phenylalanine amide.

The protein belongs to the neurotoxin 10 (Hwtx-1) family. 47 subfamily. In terms of tissue distribution, expressed by the venom gland.

It localises to the secreted. Functionally, inhibits TTX-sensitive and TTX-insensitive sodium currents (IC(50) is 0.6 uM and 0.95 uM respectively) on rat dorsal root ganglion (DRG) neurons. Inhibits muscular subtypes sodium channels Nav1.4/SCN4A and Nav1.5/SCN5A transiently transfected in to HEK293 cells (IC(50) is 5.42 uM and 0.45 uM respectively). Also blocks Kv2.1/KCNB1 potassium channels expressed in X.laevis oocytes with an IC(50) of 604 nM. Injection of the toxin in mice was immediately followed by general ataxia, lack of response to stimuli and semiparalysis. The polypeptide is U18-theraphotoxin-Cg1a (Chilobrachys guangxiensis (Chinese earth tiger tarantula)).